We begin with the raw amino-acid sequence, 266 residues long: HLA class II histocompatibility antigen, DR beta 4 chain (266 aa).

Positions 1 to 29 (MVCLKLPGGSCMAALTVTLTVLSSPLALA) are cleaved as a signal peptide. The tract at residues 30 to 124 (GDTQPRFLEQ…VESFTVQRRV (95 aa)) is beta-1. At 30-227 (GDTQPRFLEQ…SARSESAQSK (198 aa)) the chain is on the extracellular side. 2 disulfide bridges follow: cysteine 44–cysteine 108 and cysteine 146–cysteine 202. N-linked (GlcNAc...) asparagine glycosylation occurs at asparagine 48. Positions 125–227 (QPKVTVYPSK…SARSESAQSK (103 aa)) are beta-2. One can recognise an Ig-like C1-type domain in the interval 126-216 (PKVTVYPSKT…PSMMSPLTVQ (91 aa)). Residues 228–250 (MLSGVGGFVLGLLFLGTGLFIYF) form a helical membrane-spanning segment. The Cytoplasmic portion of the chain corresponds to 251–266 (RNQKGHSGLQPTGLLS). Residue lysine 254 forms a Glycyl lysine isopeptide (Lys-Gly) (interchain with G-Cter in ubiquitin) linkage.

Belongs to the MHC class II family. In terms of assembly, heterodimer of an alpha and a beta subunit; also referred as MHC class II molecule. In the endoplasmic reticulum (ER) it forms a heterononamer; 3 MHC class II molecules bind to a CD74 homotrimer (also known as invariant chain or HLA class II histocompatibility antigen gamma chain). In the endosomal/lysosomal system; CD74 undergoes sequential degradation by various proteases; leaving a small fragment termed CLIP on each MHC class II molecule. MHC class II molecule interacts with HLA_DM, and HLA_DO in B-cells, in order to release CLIP and facilitate the binding of antigenic peptides. Post-translationally, ubiquitinated by MARCH1 and MARCH8 at Lys-254 leading to sorting into the endosome system and down-regulation of MHC class II. When associated with ubiquitination of the alpha subunit of HLA-DR: HLA-DRA 'Lys-244', the down-regulation of MHC class II may be highly effective.

It localises to the cell membrane. Its subcellular location is the endoplasmic reticulum membrane. The protein localises to the golgi apparatus. The protein resides in the trans-Golgi network membrane. It is found in the endosome membrane. It localises to the lysosome membrane. Its subcellular location is the late endosome membrane. In terms of biological role, binds peptides derived from antigens that access the endocytic route of antigen presenting cells (APC) and presents them on the cell surface for recognition by the CD4 T-cells. The peptide binding cleft accommodates peptides of 10-30 residues. The peptides presented by MHC class II molecules are generated mostly by degradation of proteins that access the endocytic route, where they are processed by lysosomal proteases and other hydrolases. Exogenous antigens that have been endocytosed by the APC are thus readily available for presentation via MHC II molecules, and for this reason this antigen presentation pathway is usually referred to as exogenous. As membrane proteins on their way to degradation in lysosomes as part of their normal turn-over are also contained in the endosomal/lysosomal compartments, exogenous antigens must compete with those derived from endogenous components. Autophagy is also a source of endogenous peptides, autophagosomes constitutively fuse with MHC class II loading compartments. In addition to APCs, other cells of the gastrointestinal tract, such as epithelial cells, express MHC class II molecules and CD74 and act as APCs, which is an unusual trait of the GI tract. To produce a MHC class II molecule that presents an antigen, three MHC class II molecules (heterodimers of an alpha and a beta chain) associate with a CD74 trimer in the ER to form a heterononamer. Soon after the entry of this complex into the endosomal/lysosomal system where antigen processing occurs, CD74 undergoes a sequential degradation by various proteases, including CTSS and CTSL, leaving a small fragment termed CLIP (class-II-associated invariant chain peptide). The removal of CLIP is facilitated by HLA-DM via direct binding to the alpha-beta-CLIP complex so that CLIP is released. HLA-DM stabilizes MHC class II molecules until primary high affinity antigenic peptides are bound. The MHC II molecule bound to a peptide is then transported to the cell membrane surface. In B-cells, the interaction between HLA-DM and MHC class II molecules is regulated by HLA-DO. Primary dendritic cells (DCs) also to express HLA-DO. Lysosomal microenvironment has been implicated in the regulation of antigen loading into MHC II molecules, increased acidification produces increased proteolysis and efficient peptide loading. This is HLA class II histocompatibility antigen, DR beta 4 chain (HLA-DRB4) from Homo sapiens (Human).